We begin with the raw amino-acid sequence, 196 residues long: Alpha-crystallin A chain (196 aa).

Position 1 is an N-acetylmethionine (M1). The interval 1–63 is required for complex formation with BFSP1 and BFSP2; it reads MDVTIQHPWF…RTVLDSCISE (63 aa). Q6 carries the deamidated glutamine; partial modification. Position 45 is a phosphoserine (S45). Residue Q50 is modified to Deamidated glutamine; partial. The region spanning 76-185 is the sHSP domain; it reads HAGNPENNPI…GHSERAIPVS (110 aa). N6-acetyllysine occurs at positions 93 and 122. Residue H123 participates in Zn(2+) binding. N124 carries the deamidated asparagine; partial modification. Residues E125 and H130 each contribute to the Zn(2+) site. S145 carries the phosphoserine modification. Q170 carries the post-translational modification Deamidated glutamine; partial. Positions 170–196 are disordered; it reads QSGLDAGHSERAIPVSQEEKPSSAPLF. A compositionally biased stretch (basic and acidic residues) spans 176–190; the sequence is GHSERAIPVSQEEKP. Zn(2+) is bound at residue H177. S185 is a glycosylation site (O-linked (GlcNAc) serine).

The protein belongs to the small heat shock protein (HSP20) family. As to quaternary structure, heteromer composed of three CRYAA and one CRYAB subunits. Inter-subunit bridging via zinc ions enhances stability, which is crucial as there is no protein turn over in the lens. Can also form homodimers and homotetramers (dimers of dimers) which serve as the building blocks of homooligomers. Within homooligomers, the zinc-binding motif is created from residues of 3 different molecules. His-123 and Glu-125 from one molecule are ligands of the zinc ion, and His-130 and His-177 residues from additional molecules complete the site with tetrahedral coordination geometry. Part of a complex required for lens intermediate filament formation composed of BFSP1, BFSP2 and CRYAA. Acetylation at Lys-93 may increase chaperone activity. In terms of processing, undergoes age-dependent proteolytical cleavage at the C-terminus.

The protein resides in the cytoplasm. It localises to the nucleus. Functionally, contributes to the transparency and refractive index of the lens. Acts as a chaperone, preventing aggregation of various proteins under a wide range of stress conditions. Required for the correct formation of lens intermediate filaments as part of a complex composed of BFSP1, BFSP2 and CRYAA. The protein is Alpha-crystallin A chain (CRYAA) of Spalax ehrenbergi (Middle East blind mole rat).